Reading from the N-terminus, the 508-residue chain is Histone acetyltransferase type B catalytic subunit (508 aa).

Interaction with histone H4 N-terminus regions lie at residues 44-46 (EKE) and 207-209 (YRY). Residues 249–251 (FII) and 256–262 (QQKGLGS) contribute to the acetyl-CoA site. E284 acts as the Proton donor/acceptor in catalysis. Disordered stretches follow at residues 364-399 (SVRP…PTPE) and 461-508 (QADG…SGHA). Basic and acidic residues predominate over residues 387–399 (KGHEKALPKPTPE).

It belongs to the HAT1 family. As to quaternary structure, component of the HAT-B complex composed of at least hat-1 and hat-2. The HAT-B complex binds to histone H4 tail.

The protein resides in the cytoplasm. The protein localises to the nucleus. It carries out the reaction L-lysyl-[protein] + acetyl-CoA = N(6)-acetyl-L-lysyl-[protein] + CoA + H(+). Functionally, catalytic component of the histone acetylase B (HAT-B) complex. Acetylates 'Lys-12' of histone H4 which is required for telomeric silencing. Has intrinsic substrate specificity that modifies lysine in recognition sequence GXGKXG. Involved in DNA double-strand break repair. This chain is Histone acetyltransferase type B catalytic subunit (hat-1), found in Neurospora crassa (strain ATCC 24698 / 74-OR23-1A / CBS 708.71 / DSM 1257 / FGSC 987).